Consider the following 190-residue polypeptide: A-type ATP synthase subunit E (190 aa).

This sequence belongs to the V-ATPase E subunit family. Has multiple subunits with at least A(3), B(3), C, D, E, F, H, I and proteolipid K(x).

The protein localises to the cell membrane. Component of the A-type ATP synthase that produces ATP from ADP in the presence of a proton gradient across the membrane. This is A-type ATP synthase subunit E from Pyrobaculum neutrophilum (strain DSM 2338 / JCM 9278 / NBRC 100436 / V24Sta) (Thermoproteus neutrophilus).